The primary structure comprises 88 residues: Small ribosomal subunit protein bS16 (88 aa).

Belongs to the bacterial ribosomal protein bS16 family.

This is Small ribosomal subunit protein bS16 from Mycoplasmopsis pulmonis (strain UAB CTIP) (Mycoplasma pulmonis).